We begin with the raw amino-acid sequence, 219 residues long: ATP phosphoribosyltransferase (219 aa).

It belongs to the ATP phosphoribosyltransferase family. Short subfamily. Heteromultimer composed of HisG and HisZ subunits.

It is found in the cytoplasm. It carries out the reaction 1-(5-phospho-beta-D-ribosyl)-ATP + diphosphate = 5-phospho-alpha-D-ribose 1-diphosphate + ATP. The protein operates within amino-acid biosynthesis; L-histidine biosynthesis; L-histidine from 5-phospho-alpha-D-ribose 1-diphosphate: step 1/9. In terms of biological role, catalyzes the condensation of ATP and 5-phosphoribose 1-diphosphate to form N'-(5'-phosphoribosyl)-ATP (PR-ATP). Has a crucial role in the pathway because the rate of histidine biosynthesis seems to be controlled primarily by regulation of HisG enzymatic activity. This is ATP phosphoribosyltransferase from Syntrophotalea carbinolica (strain DSM 2380 / NBRC 103641 / GraBd1) (Pelobacter carbinolicus).